The sequence spans 156 residues: uncharacterized protein (156 aa).

This is an uncharacterized protein from Haemophilus influenzae (strain ATCC 51907 / DSM 11121 / KW20 / Rd).